The sequence spans 300 residues: Ribonuclease HIII (300 aa).

Residues 86–300 enclose the RNase H type-2 domain; sequence RPRLGVDESG…FYEICDSTDI (215 aa). 3 residues coordinate a divalent metal cation: Asp-92, Glu-93, and Asp-196.

It belongs to the RNase HII family. RnhC subfamily. Mn(2+) is required as a cofactor. The cofactor is Mg(2+).

Its subcellular location is the cytoplasm. The catalysed reaction is Endonucleolytic cleavage to 5'-phosphomonoester.. Endonuclease that specifically degrades the RNA of RNA-DNA hybrids. The chain is Ribonuclease HIII from Chlamydia abortus (strain DSM 27085 / S26/3) (Chlamydophila abortus).